We begin with the raw amino-acid sequence, 248 residues long: Orotidine 5'-phosphate decarboxylase (248 aa).

Residues aspartate 22, lysine 44, 71-80 (DLKFHDIPNT), threonine 131, arginine 192, glutamine 201, glycine 221, and arginine 222 contribute to the substrate site. Lysine 73 functions as the Proton donor in the catalytic mechanism.

It belongs to the OMP decarboxylase family. Type 1 subfamily. In terms of assembly, homodimer.

The enzyme catalyses orotidine 5'-phosphate + H(+) = UMP + CO2. It participates in pyrimidine metabolism; UMP biosynthesis via de novo pathway; UMP from orotate: step 2/2. In terms of biological role, catalyzes the decarboxylation of orotidine 5'-monophosphate (OMP) to uridine 5'-monophosphate (UMP). This is Orotidine 5'-phosphate decarboxylase from Photorhabdus laumondii subsp. laumondii (strain DSM 15139 / CIP 105565 / TT01) (Photorhabdus luminescens subsp. laumondii).